The following is a 325-amino-acid chain: Putative gluconeogenesis factor (325 aa).

Belongs to the gluconeogenesis factor family.

The protein localises to the cytoplasm. In terms of biological role, required for morphogenesis under gluconeogenic growth conditions. The polypeptide is Putative gluconeogenesis factor (Streptococcus pyogenes serotype M1).